The primary structure comprises 268 residues: Enoyl-[acyl-carrier-protein] reductase [NADH] 2 (268 aa).

NAD(+)-binding positions include G14, 20–21 (SI), Q41, 65–66 (DV), and I93. Active-site proton acceptor residues include Y146 and Y156. Residues K163 and 192–196 (IRTLA) each bind NAD(+).

This sequence belongs to the short-chain dehydrogenases/reductases (SDR) family. FabI subfamily.

It localises to the cell inner membrane. The catalysed reaction is a 2,3-saturated acyl-[ACP] + NAD(+) = a (2E)-enoyl-[ACP] + NADH + H(+). It functions in the pathway lipid metabolism; fatty acid biosynthesis. The polypeptide is Enoyl-[acyl-carrier-protein] reductase [NADH] 2 (fabI2) (Rhizobium meliloti (strain 1021) (Ensifer meliloti)).